We begin with the raw amino-acid sequence, 303 residues long: Plasmodesmata-located protein 1 (303 aa).

The N-terminal stretch at 1–21 (MKLTYQFFIFWFFLPFFAISG) is a signal peptide. The Extracellular segment spans residues 22-268 (DDDYKNLIFK…GEKRQHTERT (247 aa)). 2 Gnk2-homologous domains span residues 27–136 (NLIF…SSGF) and 141–248 (GTEM…YYSH). 6 disulfides stabilise this stretch: cysteine 33–cysteine 108, cysteine 84–cysteine 93, cysteine 96–cysteine 127, cysteine 149–cysteine 226, cysteine 202–cysteine 211, and cysteine 214–cysteine 239. A helical transmembrane segment spans residues 269–289 (IALAVGGVFVLGFVIVCLLVL). Residues 269 to 289 (IALAVGGVFVLGFVIVCLLVL) are necessary and sufficient for plasmodesmal targeting. Topologically, residues 290-303 (RSAMKKKSNKYDAY) are cytoplasmic.

The protein belongs to the cysteine-rich repeat secretory protein family. Plasmodesmata-located proteins (PDLD) subfamily. Interacts with AZI1. Interacts with PDLP5. Does not interact with DIR1. As to quaternary structure, (Microbial infection) Interacts with Grapevine fanleaf virus (GFLV) 2B-MP. Interacts with Cauliflower mosaic virus (CaMV) movement protein. Highly expressed in cell suspension. Expressed in epidermal and spongy mesophyll cells, and the cell wall interface at the base of the leaf trichome (at protein level). Expressed in haustoria-containing cells.

It is found in the cell membrane. Its subcellular location is the cell junction. The protein localises to the plasmodesma. Modulates cell-to-cell trafficking. Required for systemic acquired resistance (SAR) which is mediated by the signaling molecules azelaic acid (AzA), glycerol-3-phosphate (G3P), and salicylic acid (SA). Required for the proper localization and stability of AZI1 which is involved in SAR. Mediates callose deposition during downy mildew fungal infection around haustoria. Haustoria are unicellular protrusions from hyphae and function as the site of molecular exchange of nutrients and effectors between host and pathogen. This is Plasmodesmata-located protein 1 from Arabidopsis thaliana (Mouse-ear cress).